The chain runs to 529 residues: Peptide chain release factor 3 (529 aa).

A tr-type G domain is found at 11 to 280 (AARRTFAIIS…GLVAWAPPPM (270 aa)). GTP-binding positions include 20–27 (SHPDAGKT), 88–92 (DTPGH), and 142–145 (NKVD).

This sequence belongs to the TRAFAC class translation factor GTPase superfamily. Classic translation factor GTPase family. PrfC subfamily.

It localises to the cytoplasm. Functionally, increases the formation of ribosomal termination complexes and stimulates activities of RF-1 and RF-2. It binds guanine nucleotides and has strong preference for UGA stop codons. It may interact directly with the ribosome. The stimulation of RF-1 and RF-2 is significantly reduced by GTP and GDP, but not by GMP. The protein is Peptide chain release factor 3 of Sodalis glossinidius (strain morsitans).